Reading from the N-terminus, the 193-residue chain is Acyl carrier protein phosphodiesterase (193 aa).

This sequence belongs to the AcpH family.

The enzyme catalyses holo-[ACP] + H2O = apo-[ACP] + (R)-4'-phosphopantetheine + H(+). Functionally, converts holo-ACP to apo-ACP by hydrolytic cleavage of the phosphopantetheine prosthetic group from ACP. The protein is Acyl carrier protein phosphodiesterase of Escherichia coli O6:K15:H31 (strain 536 / UPEC).